We begin with the raw amino-acid sequence, 230 residues long: UPF0494 membrane protein PB2B2.14c (230 aa).

Helical transmembrane passes span 78-98 (WPLLIIWCILIVFAIDKNFEV), 120-140 (IWGPIAIYICLFVLLLLGLIY), and 148-168 (AIPLISIVIAAVVVIIAVAMV).

It belongs to the UPF0494 family.

It is found in the membrane. The protein is UPF0494 membrane protein PB2B2.14c of Schizosaccharomyces pombe (strain 972 / ATCC 24843) (Fission yeast).